A 500-amino-acid polypeptide reads, in one-letter code: Coiled-coil domain-containing protein 85A (500 aa).

Low complexity predominate over residues 1–23 (MSKAAGGSAPAAESCPSAPAGAS). Residues 1-30 (MSKAAGGSAPAAESCPSAPAGASTPTGVDD) form a disordered region. 2 coiled-coil regions span residues 38-104 (ELLQ…RDLC) and 132-171 (MHKE…DEEK). Disordered stretches follow at residues 200–405 (RDVG…SGMN) and 426–465 (NRML…QPEP). Over residues 204 to 215 (DGSSTSSTGSTD) the composition is skewed to low complexity. Over residues 231–254 (HLQKPRSEGSPEHTKHRSTSPEHL) the composition is skewed to basic and acidic residues. Over residues 372–381 (GSGGSGGGSR) the composition is skewed to gly residues. Basic and acidic residues predominate over residues 383-395 (GTLRRPAQEDSSS). Residues 404 to 429 (MNESTLSYVRQLEARVRQLEEENRML) adopt a coiled-coil conformation. A compositionally biased stretch (polar residues) spans 434-463 (FRLSSGADGNNSSLNSPASFSGHTTPSQQP). An Asymmetric dimethylarginine modification is found at Arg488.

It belongs to the CCDC85 family. In terms of assembly, may interact with ARVCF; CTNND1; CTNND2 and PKP4.

It is found in the cell junction. The protein localises to the adherens junction. In terms of biological role, may play a role in cell-cell adhesion and epithelium development through its interaction with proteins of the beta-catenin family. The sequence is that of Coiled-coil domain-containing protein 85A (Ccdc85a) from Mus musculus (Mouse).